Reading from the N-terminus, the 426-residue chain is Enolase (426 aa).

A disordered region spans residues 38–60; the sequence is PSGASTGAHEAVEKRDGDKSRYG. The span at 47–58 shows a compositional bias: basic and acidic residues; that stretch reads EAVEKRDGDKSR. Residue Q163 participates in (2R)-2-phosphoglycerate binding. The Proton donor role is filled by E205. Residues D242, E285, and D312 each contribute to the Mg(2+) site. Residues K337, R366, S367, and K388 each contribute to the (2R)-2-phosphoglycerate site. K337 acts as the Proton acceptor in catalysis.

The protein belongs to the enolase family. Mg(2+) is required as a cofactor.

The protein localises to the cytoplasm. The protein resides in the secreted. Its subcellular location is the cell surface. It catalyses the reaction (2R)-2-phosphoglycerate = phosphoenolpyruvate + H2O. It participates in carbohydrate degradation; glycolysis; pyruvate from D-glyceraldehyde 3-phosphate: step 4/5. Its function is as follows. Catalyzes the reversible conversion of 2-phosphoglycerate (2-PG) into phosphoenolpyruvate (PEP). It is essential for the degradation of carbohydrates via glycolysis. This Caulobacter sp. (strain K31) protein is Enolase.